The sequence spans 338 residues: Phenylalanine--tRNA ligase alpha subunit (338 aa).

Glu253 serves as a coordination point for Mg(2+).

This sequence belongs to the class-II aminoacyl-tRNA synthetase family. Phe-tRNA synthetase alpha subunit type 1 subfamily. As to quaternary structure, tetramer of two alpha and two beta subunits. Requires Mg(2+) as cofactor.

It localises to the cytoplasm. It catalyses the reaction tRNA(Phe) + L-phenylalanine + ATP = L-phenylalanyl-tRNA(Phe) + AMP + diphosphate + H(+). The protein is Phenylalanine--tRNA ligase alpha subunit of Geobacter metallireducens (strain ATCC 53774 / DSM 7210 / GS-15).